Consider the following 189-residue polypeptide: Phosphoheptose isomerase (189 aa).

In terms of domain architecture, SIS spans 34–189; that stretch reads LVDALGNGKK…CDLLEKRLFG (156 aa). 49–51 provides a ligand contact to substrate; it reads NGG. His-58 and Glu-62 together coordinate Zn(2+). Substrate contacts are provided by residues Glu-62, 91–92, 117–119, Ser-122, and Gln-169; these read ND and STS. Zn(2+) is bound by residues Gln-169 and His-177.

The protein belongs to the SIS family. GmhA subfamily. As to quaternary structure, homotetramer. The cofactor is Zn(2+).

Its subcellular location is the cytoplasm. It carries out the reaction 2 D-sedoheptulose 7-phosphate = D-glycero-alpha-D-manno-heptose 7-phosphate + D-glycero-beta-D-manno-heptose 7-phosphate. It functions in the pathway carbohydrate biosynthesis; D-glycero-D-manno-heptose 7-phosphate biosynthesis; D-glycero-alpha-D-manno-heptose 7-phosphate and D-glycero-beta-D-manno-heptose 7-phosphate from sedoheptulose 7-phosphate: step 1/1. Its function is as follows. Catalyzes the isomerization of sedoheptulose 7-phosphate in D-glycero-D-manno-heptose 7-phosphate. The sequence is that of Phosphoheptose isomerase from Geotalea uraniireducens (strain Rf4) (Geobacter uraniireducens).